The following is a 765-amino-acid chain: Single-minded homolog 1 (765 aa).

The bHLH domain maps to 1-53 (MKEKSKNAARTRREKENSEFYELAKLLPLPSAITSQLDKASIIRLTTSYLKMR). PAS domains are found at residues 77-147 (GREL…QPYH) and 218-288 (PPSA…LVKG). The PAC domain occupies 292–335 (TKYYRFLAKQGGWVWVQSYATIVHNSRSSRPHCIVSVNYVLTDT). The 430-residue stretch at 336 to 765 (EYKGLQLSLD…GTSVIITNGS (430 aa)) folds into the Single-minded C-terminal domain. Low complexity-rich tracts occupy residues 352 to 365 (PTFS…PTIS) and 373 to 385 (SRLS…SRTS). Disordered regions lie at residues 352–428 (PTFS…PGSQ) and 527–560 (WDED…PHEP). The short motif at 368-387 (RKGAKSRLSSSKSKSRTSPY) is the Nuclear localization signal element. The span at 394–404 (HTERSESDHDS) shows a compositional bias: basic and acidic residues.

As to quaternary structure, efficient DNA binding requires dimerization with another bHLH protein. Heterodimer; forms a heterodimer with ARNT, ARNT2. As to expression, detected in lung, skeletal muscle and kidney. During fetal development it is found in the CNS, developing kidney, mesodermal and endodermal tissues, including developing somites, mesonephric duct, and foregut.

The protein resides in the nucleus. Functionally, transcriptional factor that may have pleiotropic effects during embryogenesis and in the adult. The polypeptide is Single-minded homolog 1 (Sim1) (Mus musculus (Mouse)).